Reading from the N-terminus, the 185-residue chain is Large ribosomal subunit protein uL5 (185 aa).

Belongs to the universal ribosomal protein uL5 family. Part of the 50S ribosomal subunit; part of the 5S rRNA/L5/L18/L25 subcomplex. Contacts the 5S rRNA and the P site tRNA. Forms a bridge to the 30S subunit in the 70S ribosome.

In terms of biological role, this is one of the proteins that bind and probably mediate the attachment of the 5S RNA into the large ribosomal subunit, where it forms part of the central protuberance. In the 70S ribosome it contacts protein S13 of the 30S subunit (bridge B1b), connecting the 2 subunits; this bridge is implicated in subunit movement. Contacts the P site tRNA; the 5S rRNA and some of its associated proteins might help stabilize positioning of ribosome-bound tRNAs. In Rhizobium etli (strain CIAT 652), this protein is Large ribosomal subunit protein uL5.